A 387-amino-acid chain; its full sequence is NADPH-dependent aldehyde reductase YqhD (387 aa).

NADP(+)-binding residues include G38, S40, N68, G95, S96, D99, T138, N147, G149, K160, Y179, and T182. The Zn(2+) site is built by D194, H198, H267, and H281.

Belongs to the iron-containing alcohol dehydrogenase family. In terms of assembly, homodimer. The crystals contain two dimers in the asymmetric unit. Zn(2+) serves as cofactor.

The catalysed reaction is a primary alcohol + NADP(+) = an aldehyde + NADPH + H(+). It catalyses the reaction butan-1-ol + NADP(+) = butanal + NADPH + H(+). The enzyme catalyses 1-propanol + NADP(+) = propanal + NADPH + H(+). It carries out the reaction allyl alcohol + NADP(+) = acrolein + NADPH + H(+). Exhibits NADPH-dependent reductase activity for a broad range of short-chain aldehydes. Shows highest catalytic efficiency toward butanal, propanal and the highly toxic aldehydes acrolein and malondialdehyde (MDA), which are produced mainly during lipid peroxidation. Mediates resistance to reactive oxygen species (ROS) elicitors, such as paraquat and potassium tellurite, probably by protecting the cell against the toxic effects of reactive aldehydes derived from membrane lipid peroxidation. Also acts, with lower efficiency, on acetaldehyde, glyceraldehyde, glycolaldehyde, methylglyoxal, glyoxal and hydroxyacetone. Could be involved in glyoxal metabolism, by catalyzing the reduction of glyoxal to glycolaldehyde, and further to 1,2-ethandiol. Catalyzes the reduction of isobutyraldehyde (2-methylpropanal) to isobutanol, and probably contributes to the production of isobutanol. Can probably catalyze the reduction of glutaraldehyde, a widely used biocide, to 1,5-pentanediol, which is non-toxic. Overexpression of YqhD protects the cells against glutaraldehyde toxicity. Can catalyze in vitro the NADPH-dependent reduction of furfural, a natural product of lignocellulosic decomposition, to the less toxic product, furfuryl alcohol. However, it is unlikely that furfural is a physiological substrate. In terms of biological role, in contrast, Sulzenbacher et al. detected significant activities only in the presence of alcohol and NADP(+). They reported in vitro NADP(+)-dependent alcohol dehydrogenase (ADH) activity towards various alcohols, with a preference for alcohols longer than C(3), but the affinity for the substrates is poor, suggesting that these compounds are not the physiological substrates. Perez et al. did not detect dehydrogenase activity with short and medium chain alcohols such as methanol, ethanol, propanol, butanol or isopropanol. The sequence is that of NADPH-dependent aldehyde reductase YqhD (yqhD) from Escherichia coli (strain K12).